Consider the following 228-residue polypeptide: Deoxyguanosine kinase (228 aa).

Residue 8 to 16 coordinates ATP; it reads GPIGAGKSS. Residues glutamate 32, tyrosine 44, and glutamine 55 each contribute to the substrate site. Catalysis depends on aspartate 78, which acts as the Proton acceptor. 3 residues coordinate substrate: arginine 79, aspartate 84, and glutamate 149.

The protein belongs to the DCK/DGK family. As to quaternary structure, heterodimer of a deoxyadenosine (DAK) and a deoxyguanosine kinase (DGK).

It catalyses the reaction 2'-deoxyguanosine + ATP = dGMP + ADP + H(+). In terms of biological role, DGK/DAK plays an essential role in generating the deoxyribonucleotide precursors, dGTP and dATP, for DNA metabolism. This Lactobacillus acidophilus (strain ATCC 700396 / NCK56 / N2 / NCFM) protein is Deoxyguanosine kinase.